The sequence spans 341 residues: Methionine import ATP-binding protein MetN 1 (341 aa).

The ABC transporter domain occupies 2–241 (IEFRQVSKSF…PKTTIAQNFV (240 aa)). Residue 38 to 45 (GYSGAGKS) coordinates ATP.

This sequence belongs to the ABC transporter superfamily. Methionine importer (TC 3.A.1.24) family. As to quaternary structure, the complex is composed of two ATP-binding proteins (MetN), two transmembrane proteins (MetI) and a solute-binding protein (MetQ).

Its subcellular location is the cell membrane. The enzyme catalyses L-methionine(out) + ATP + H2O = L-methionine(in) + ADP + phosphate + H(+). It catalyses the reaction D-methionine(out) + ATP + H2O = D-methionine(in) + ADP + phosphate + H(+). Part of the ABC transporter complex MetNIQ involved in methionine import. Responsible for energy coupling to the transport system. The sequence is that of Methionine import ATP-binding protein MetN 1 from Staphylococcus aureus (strain Mu50 / ATCC 700699).